The chain runs to 60 residues: Large ribosomal subunit protein eL37 (60 aa).

Zn(2+) contacts are provided by cysteine 19, cysteine 22, cysteine 34, and cysteine 37. A C4-type zinc finger spans residues 19-37; it reads CRRCGSISYHARHKVCSAC.

This sequence belongs to the eukaryotic ribosomal protein eL37 family. Requires Zn(2+) as cofactor.

In terms of biological role, binds to the 23S rRNA. In Methanosphaerula palustris (strain ATCC BAA-1556 / DSM 19958 / E1-9c), this protein is Large ribosomal subunit protein eL37.